A 123-amino-acid polypeptide reads, in one-letter code: uncharacterized protein (123 aa).

The helical transmembrane segment at 5 to 25 (GTLVIIFAIVLILCIMLLFFY) threads the bilayer. Residues 32 to 53 (KPSVLPPPIPPPTPPPSKKKYD) form a disordered region. A compositionally biased stretch (pro residues) spans 35–47 (VLPPPIPPPTPPP).

This sequence belongs to the asfivirus CP123L family.

Its subcellular location is the host membrane. The protein localises to the virion. This is an uncharacterized protein from Ornithodoros (relapsing fever ticks).